We begin with the raw amino-acid sequence, 174 residues long: Shikimate kinase 2 (174 aa).

12-17 (GCGKTT) contacts ATP. Residues Thr16 and Asp32 each coordinate Mg(2+). Substrate-binding residues include Asp34, Arg58, and Gly79. Residues 112 to 126 (RAYPEDDQRPSLTGK) are LID domain. Arg120 contributes to the ATP binding site. Residue Arg139 participates in substrate binding. An ATP-binding site is contributed by Gln155.

Belongs to the shikimate kinase family. AroL subfamily. As to quaternary structure, monomer. Mg(2+) is required as a cofactor.

Its subcellular location is the cytoplasm. The enzyme catalyses shikimate + ATP = 3-phosphoshikimate + ADP + H(+). The protein operates within metabolic intermediate biosynthesis; chorismate biosynthesis; chorismate from D-erythrose 4-phosphate and phosphoenolpyruvate: step 5/7. In terms of biological role, catalyzes the specific phosphorylation of the 3-hydroxyl group of shikimic acid using ATP as a cosubstrate. The chain is Shikimate kinase 2 from Sodalis glossinidius (strain morsitans).